Reading from the N-terminus, the 184-residue chain is Protein FAM89A (184 aa).

The interval 148 to 184 (YFQEQNSLHDRRDRGPPRDLSLPVSSLSSSDWILESI) is disordered. Residues 154-164 (SLHDRRDRGPP) show a composition bias toward basic and acidic residues. Residues 167 to 184 (LSLPVSSLSSSDWILESI) show a composition bias toward low complexity.

This sequence belongs to the FAM89 family.

In Homo sapiens (Human), this protein is Protein FAM89A (FAM89A).